Here is a 271-residue protein sequence, read N- to C-terminus: uncharacterized protein (271 aa).

Positions 77–205 (IIGVYFGDAN…SKELLKKLDV (129 aa)) constitute a DOD-type homing endonuclease domain.

This is an uncharacterized protein from Methanocaldococcus jannaschii (strain ATCC 43067 / DSM 2661 / JAL-1 / JCM 10045 / NBRC 100440) (Methanococcus jannaschii).